The sequence spans 305 residues: MKYKVMFFGTPEIAKIVLETLFNMHEVDLIAVVSQPDAHFDRKKNVIYSPVKQFCLDHNIKLFQPEKIKEIEEEIRILGPDIIITCAFGQFINQGIIDIPKYKIVNIHASLLPKLRGGAPIHYAILNGELKTGITLMHTIKKMDAGNILFQRSLEINDCTTTKSLTLELANLSALMIKEHFLELVKPNLVGIQQDENSVSFAYNIQKDQNIINFDQPAFFINRFVNAMYDKPIAIMQYNGVSIKVYQVKITNQKSCQKPGTIMIFKNQLFVSTQDFDIELLLIQLPNKKPLSPKVLLNGKNPFIN.

110 to 113 is a binding site for (6S)-5,6,7,8-tetrahydrofolate; sequence SLLP.

It belongs to the Fmt family.

The catalysed reaction is L-methionyl-tRNA(fMet) + (6R)-10-formyltetrahydrofolate = N-formyl-L-methionyl-tRNA(fMet) + (6S)-5,6,7,8-tetrahydrofolate + H(+). Attaches a formyl group to the free amino group of methionyl-tRNA(fMet). The formyl group appears to play a dual role in the initiator identity of N-formylmethionyl-tRNA by promoting its recognition by IF2 and preventing the misappropriation of this tRNA by the elongation apparatus. The chain is Methionyl-tRNA formyltransferase from Ureaplasma parvum serovar 3 (strain ATCC 700970).